A 129-amino-acid polypeptide reads, in one-letter code: Glycine cleavage system H protein (129 aa).

Residues 24–106 form the Lipoyl-binding domain; that stretch reads LVRVGLSAYA…HGEGWLLVIR (83 aa). An N6-lipoyllysine modification is found at lysine 65.

The protein belongs to the GcvH family. As to quaternary structure, the glycine cleavage system is composed of four proteins: P, T, L and H. (R)-lipoate serves as cofactor.

In terms of biological role, the glycine cleavage system catalyzes the degradation of glycine. The H protein shuttles the methylamine group of glycine from the P protein to the T protein. In Synechococcus sp. (strain CC9311), this protein is Glycine cleavage system H protein.